Consider the following 602-residue polypeptide: Toxin YwqJ (602 aa).

The LXG domain maps to 1 to 235 (MSKVFESKSL…TTYIDAKTQQ (235 aa)). 2 coiled-coil regions span residues 6 to 41 (ESKSLIEEAKSRKKQYETLEEQLNTLKKAFQGVADL) and 227 to 251 (TYIDAKTQQAEARRLQEKAEEEANK).

The protein in the N-terminal section; belongs to the LXG family. As to quaternary structure, probably interacts with cognate immunity protein YwqK but not with non-cognate immunity proteins. The interaction inhibits the toxic activity of YwqJ.

It localises to the secreted. In terms of biological role, toxic component of one of 6 LXG toxin-immunity modules in this strain. They promote kin selection, mediate competition in biofilms, and drive spatial segregation of different strains, indicating that LXG toxins may help avoid warfare between strains in biofilms. Mediates intercellular competition during biofilm formation; disruption of the operon disadvantages the bacteria, but overexpression of the cognate immunity protein restores growth in competition with wild-type. Overexpression alone in situ causes growth arrest but not cell lysis; no effect is seen on DNA or rRNA. Co-overexpression with cognate immunity protein YwqK does not cause growth arrest. The toxic effect is dependent on the epsA and tapA operons which are required for biofilm formation. Its toxic effects are probably neutralized by its cognate immunity protein YwqK, but not by immunity proteins specific to other toxins with the LXG domain. May have deaminase activity. The protein is Toxin YwqJ (ywqJ) of Bacillus subtilis (strain 168).